The following is a 130-amino-acid chain: Small ribosomal subunit protein uS8 (130 aa).

The protein belongs to the universal ribosomal protein uS8 family. In terms of assembly, part of the 30S ribosomal subunit. Contacts proteins S5 and S12.

In terms of biological role, one of the primary rRNA binding proteins, it binds directly to 16S rRNA central domain where it helps coordinate assembly of the platform of the 30S subunit. This chain is Small ribosomal subunit protein uS8, found in Shewanella pealeana (strain ATCC 700345 / ANG-SQ1).